Consider the following 65-residue polypeptide: MPKMKTKKSAAKRFKVRGSGSIKRGQAFKRHILTKKTTKNKRQLRGSAAVHETNVASVKAMMPFA.

Basic residues predominate over residues 1-16 (MPKMKTKKSAAKRFKV). The disordered stretch occupies residues 1 to 25 (MPKMKTKKSAAKRFKVRGSGSIKRG).

It belongs to the bacterial ribosomal protein bL35 family.

This Bordetella parapertussis (strain 12822 / ATCC BAA-587 / NCTC 13253) protein is Large ribosomal subunit protein bL35.